Consider the following 234-residue polypeptide: Cyclin-J18 (234 aa).

It belongs to the cyclin family.

This is Cyclin-J18 (CYCJ18) from Arabidopsis thaliana (Mouse-ear cress).